The primary structure comprises 91 residues: C-C motif chemokine 5 (91 aa).

An N-terminal signal peptide occupies residues 1–23; it reads MKVSATAFAVLLMAAALCAPASA. Intrachain disulfides connect cysteine 33-cysteine 57 and cysteine 34-cysteine 73.

The protein belongs to the intercrine beta (chemokine CC) family.

Its subcellular location is the secreted. In terms of biological role, chemoattractant for blood monocytes, memory T-helper cells and eosinophils. Causes the release of histamine from basophils and activates eosinophils. May activate several chemokine receptors including CCR1, CCR3, CCR4 and CCR5. May also be an agonist of the G protein-coupled receptor GPR75. Together with GPR75, may play a role in neuron survival through activation of a downstream signaling pathway involving the PI3, Akt and MAP kinases. By activating GPR75 may also play a role in insulin secretion by islet cells. The protein is C-C motif chemokine 5 (CCL5) of Bos taurus (Bovine).